The primary structure comprises 92 residues: MHISKLPAALLIFSVALNHLKATPVRSGTNHQMDKRKCNTATCATQRLANFLVHSNNNLGPVLSPTNVGSNTYGKRSAAEIPDGDSLDLFLL.

An N-terminal signal peptide occupies residues 1–22 (MHISKLPAALLIFSVALNHLKA). The propeptide occupies 23–34 (TPVRSGTNHQMD). A disulfide bridge connects residues Cys38 and Cys43. Residue Tyr73 is modified to Tyrosine amide. Residues 77–92 (SAAEIPDGDSLDLFLL) constitute a propeptide that is removed on maturation.

Belongs to the calcitonin family. In terms of assembly, can form homodimers. Interacts with IDE and INS. Interaction with INS inhibits homodimerization and fibril formation.

It localises to the secreted. Amylin/IAPP is a glucoregulatory peptide hormone that plays an important role in the regulation of energy homeostasis. Selectively inhibits insulin-stimulated glucose utilization and glycogen deposition in muscle, while not affecting adipocyte glucose metabolism. IAPP function is mediated by the CALCR-RAMPs (AMYRs) receptor complexes. Amylin can also bind CALCR receptor in the absence of RAMPs, although it is more selective for AMYRs. This chain is Islet amyloid polypeptide (IAPP), found in Mesocricetus auratus (Golden hamster).